A 338-amino-acid polypeptide reads, in one-letter code: Ketol-acid reductoisomerase (NADP(+)) (338 aa).

A KARI N-terminal Rossmann domain is found at 1 to 181 (MKVFYDKDAD…GGGRAGIIET (181 aa)). Residues 24 to 27 (YGSQ), Arg-47, and Ser-52 contribute to the NADP(+) site. His-107 is an active-site residue. Residue Gly-133 coordinates NADP(+). Residues 182 to 327 (NFREETETDL…SKLRAMMPWI (146 aa)) enclose the KARI C-terminal knotted domain. The Mg(2+) site is built by Asp-190, Glu-194, Glu-226, and Glu-230. Ser-251 lines the substrate pocket.

It belongs to the ketol-acid reductoisomerase family. Mg(2+) serves as cofactor.

It catalyses the reaction (2R)-2,3-dihydroxy-3-methylbutanoate + NADP(+) = (2S)-2-acetolactate + NADPH + H(+). The enzyme catalyses (2R,3R)-2,3-dihydroxy-3-methylpentanoate + NADP(+) = (S)-2-ethyl-2-hydroxy-3-oxobutanoate + NADPH + H(+). The protein operates within amino-acid biosynthesis; L-isoleucine biosynthesis; L-isoleucine from 2-oxobutanoate: step 2/4. It participates in amino-acid biosynthesis; L-valine biosynthesis; L-valine from pyruvate: step 2/4. Its function is as follows. Involved in the biosynthesis of branched-chain amino acids (BCAA). Catalyzes an alkyl-migration followed by a ketol-acid reduction of (S)-2-acetolactate (S2AL) to yield (R)-2,3-dihydroxy-isovalerate. In the isomerase reaction, S2AL is rearranged via a Mg-dependent methyl migration to produce 3-hydroxy-3-methyl-2-ketobutyrate (HMKB). In the reductase reaction, this 2-ketoacid undergoes a metal-dependent reduction by NADPH to yield (R)-2,3-dihydroxy-isovalerate. This is Ketol-acid reductoisomerase (NADP(+)) from Burkholderia thailandensis (strain ATCC 700388 / DSM 13276 / CCUG 48851 / CIP 106301 / E264).